We begin with the raw amino-acid sequence, 234 residues long: UPF0309 protein lmo0025 (234 aa).

The region spanning V31–P205 is the SIS domain.

Belongs to the UPF0309 family.

This chain is UPF0309 protein lmo0025, found in Listeria monocytogenes serovar 1/2a (strain ATCC BAA-679 / EGD-e).